Reading from the N-terminus, the 607-residue chain is Elongation factor 4 (607 aa).

One can recognise a tr-type G domain in the interval Glu11 to Asp193. GTP is bound by residues Asp23–Thr28 and Asn140–Asp143.

It belongs to the TRAFAC class translation factor GTPase superfamily. Classic translation factor GTPase family. LepA subfamily.

It localises to the cell membrane. The enzyme catalyses GTP + H2O = GDP + phosphate + H(+). In terms of biological role, required for accurate and efficient protein synthesis under certain stress conditions. May act as a fidelity factor of the translation reaction, by catalyzing a one-codon backward translocation of tRNAs on improperly translocated ribosomes. Back-translocation proceeds from a post-translocation (POST) complex to a pre-translocation (PRE) complex, thus giving elongation factor G a second chance to translocate the tRNAs correctly. Binds to ribosomes in a GTP-dependent manner. In Staphylococcus epidermidis (strain ATCC 35984 / DSM 28319 / BCRC 17069 / CCUG 31568 / BM 3577 / RP62A), this protein is Elongation factor 4.